Here is a 495-residue protein sequence, read N- to C-terminus: Potassium voltage-gated channel subfamily A member 1 (495 aa).

The disordered stretch occupies residues 1-30; it reads MTVMSGENVDEASAAPGHPQDGSYPRQADH. The interval 1 to 128 is tetramerization domain; the sequence is MTVMSGENVD…FYELGEEAME (128 aa). Over 1-164 the chain is Cytoplasmic; sequence MTVMSGENVD…LLFEYPESSG (164 aa). Residue Ser23 is modified to Phosphoserine. A helical transmembrane segment spans residues 165–186; it reads PARVIAIVSVMVILISIVIFCL. Residues 187–220 are Extracellular-facing; that stretch reads ETLPELKDDKDFTGTVHRIDNTTVIYNSNIFTDP. Asn207 is a glycosylation site (N-linked (GlcNAc...) asparagine). Residues 221 to 242 traverse the membrane as a helical segment; the sequence is FFIVETLCIIWFSFELVVRFFA. Cys243 carries S-palmitoyl cysteine lipidation. The Cytoplasmic segment spans residues 243–253; the sequence is CPSKTDFFKNI. A helical membrane pass occupies residues 254–274; that stretch reads MNFIDIVAIIPYFITLGTEIA. The Extracellular portion of the chain corresponds to 275-287; it reads EQEGNQKGEQATS. The helical; Voltage-sensor transmembrane segment at 288–308 threads the bilayer; sequence LAILRVIRLVRVFRIFKLSRH. Residues 309–323 lie on the Cytoplasmic side of the membrane; it reads SKGLQILGQTLKASM. Positions 310–323 are S4-S5 linker; sequence KGLQILGQTLKASM. A Phosphoserine; by PKA modification is found at Ser322. A helical membrane pass occupies residues 324 to 345; it reads RELGLLIFFLFIGVILFSSAVY. The Extracellular segment spans residues 346 to 359; it reads FAEAEEAESHFSSI. The helical intramembrane region spans 360 to 371; sequence PDAFWWAVVSMT. The Selectivity filter motif lies at 372–377; that stretch reads TVGYGD. The stretch at 372 to 379 is an intramembrane region; the sequence is TVGYGDMY. At 380 to 386 the chain is on the extracellular side; that stretch reads PVTIGGK. A helical membrane pass occupies residues 387-415; it reads IVGSLCAIAGVLTIALPVPVIVSNFNYFY. The Cytoplasmic portion of the chain corresponds to 416 to 495; it reads HRETEGEEQA…VNKSKLLTDV (80 aa). Ser437 and Ser439 each carry phosphoserine. Position 446 is a phosphoserine; by PKA (Ser446). The PDZ-binding signature appears at 493–495; it reads TDV.

This sequence belongs to the potassium channel family. A (Shaker) (TC 1.A.1.2) subfamily. Kv1.1/KCNA1 sub-subfamily. Homotetramer and heterotetramer with other channel-forming alpha subunits, such as KCNA2, KCNA4, KCNA5, KCNA6 and KCNA7. Channel activity is regulated by interaction with the beta subunits KCNAB1 and KCNAB2. Identified in a complex with KCNA2 and KCNAB2. Interacts (via C-terminus) with the PDZ domains of DLG1, DLG2 and DLG4. Interacts with LGI1 within a complex containing LGI1, KCNA4 and KCNAB1. Interacts (via N-terminus) with STX1A; this promotes channel inactivation. Interacts (via N-terminus) with the heterodimer formed by GNB1 and GNG2; this promotes channel inactivation. Can interact simultaneously with STX1A and the heterodimer formed by GNB1 and GNG2. Interacts (via cytoplasmic N-terminal domain) with KCNRG; this inhibits channel activity. Interacts with ANK3; this inhibits channel activity. Interacts with ADAM11. N-glycosylated. Post-translationally, palmitoylated on Cys-243; which may be required for membrane targeting. In terms of processing, phosphorylated on tyrosine residues. Phosphorylation increases in response to NRG1; this inhibits channel activity. Phosphorylation at Ser-446 regulates channel activity by down-regulating expression at the cell membrane. As to expression, detected adjacent to nodes of Ranvier in juxtaparanodal zones in spinal cord nerve fibers, but also in paranodal regions in some myelinated spinal cord axons (at protein level). Detected in the islet of Langerhans.

Its subcellular location is the cell membrane. The protein resides in the membrane. It is found in the cell projection. It localises to the axon. The protein localises to the cytoplasmic vesicle. Its subcellular location is the perikaryon. The protein resides in the endoplasmic reticulum. It is found in the dendrite. It localises to the cell junction. The protein localises to the synapse. Its subcellular location is the presynaptic cell membrane. The protein resides in the presynapse. It catalyses the reaction K(+)(in) = K(+)(out). Its activity is regulated as follows. Inhibited by 1.1 mM 4-aminopyridine (4-AP) and by 20 mM tetraethylammonium (TEA), but not by charybdotoxin (CTX). Inhibited by dendrotoxin (DTX). Voltage-gated potassium channel that mediates transmembrane potassium transport in excitable membranes, primarily in the brain and the central nervous system, but also in the kidney. Contributes to the regulation of the membrane potential and nerve signaling, and prevents neuronal hyperexcitability. Forms tetrameric potassium-selective channels through which potassium ions pass in accordance with their electrochemical gradient. The channel alternates between opened and closed conformations in response to the voltage difference across the membrane. Can form functional homotetrameric channels and heterotetrameric channels that contain variable proportions of KCNA1, KCNA2, KCNA4, KCNA5, KCNA6, KCNA7, and possibly other family members as well; channel properties depend on the type of alpha subunits that are part of the channel. Channel properties are modulated by cytoplasmic beta subunits that regulate the subcellular location of the alpha subunits and promote rapid inactivation of delayed rectifier potassium channels. In vivo, membranes probably contain a mixture of heteromeric potassium channel complexes, making it difficult to assign currents observed in intact tissues to any particular potassium channel family member. Homotetrameric KCNA1 forms a delayed-rectifier potassium channel that opens in response to membrane depolarization, followed by slow spontaneous channel closure. In contrast, a heterotetrameric channel formed by KCNA1 and KCNA4 shows rapid inactivation. Regulates neuronal excitability in hippocampus, especially in mossy fibers and medial perforant path axons, preventing neuronal hyperexcitability. Response to toxins that are selective for KCNA1, respectively for KCNA2, suggests that heteromeric potassium channels composed of both KCNA1 and KCNA2 play a role in pacemaking and regulate the output of deep cerebellar nuclear neurons. May function as down-stream effector for G protein-coupled receptors and inhibit GABAergic inputs to basolateral amygdala neurons. May contribute to the regulation of neurotransmitter release, such as gamma-aminobutyric acid (GABA) release. Plays a role in regulating the generation of action potentials and preventing hyperexcitability in myelinated axons of the vagus nerve, and thereby contributes to the regulation of heart contraction. Required for normal neuromuscular responses. Regulates the frequency of neuronal action potential firing in response to mechanical stimuli, and plays a role in the perception of pain caused by mechanical stimuli, but does not play a role in the perception of pain due to heat stimuli. Required for normal responses to auditory stimuli and precise location of sound sources, but not for sound perception. The use of toxins that block specific channels suggest that it contributes to the regulation of the axonal release of the neurotransmitter dopamine. Required for normal postnatal brain development and normal proliferation of neuronal precursor cells in the brain. Plays a role in the reabsorption of Mg(2+) in the distal convoluted tubules in the kidney and in magnesium ion homeostasis, probably via its effect on the membrane potential. This chain is Potassium voltage-gated channel subfamily A member 1, found in Homo sapiens (Human).